Consider the following 750-residue polypeptide: Glutathione biosynthesis bifunctional protein GshAB (750 aa).

Residues 1 to 333 (MIIDRLLQRS…EANRLNDLIA (333 aa)) are glutamate--cysteine ligase. The segment at 32–51 (QPTQRVAQTPHPKTLGSRNY) is disordered. In terms of domain architecture, ATP-grasp spans 489–747 (KKILDEKHFP…ITPRILAKLF (259 aa)). 516-574 (SQIQDKPIVVKPKSTNFGLGISIFKTSANLASYEKAIDIAFTEDSAILVEEYIEGTEYR) is an ATP binding site. Mg(2+) contacts are provided by Asp696, Glu717, and Asn719. Mn(2+) is bound by residues Asp696, Glu717, and Asn719.

This sequence in the N-terminal section; belongs to the glutamate--cysteine ligase type 1 family. Type 2 subfamily. As to quaternary structure, monomer. The cofactor is Mg(2+). It depends on Mn(2+) as a cofactor.

It carries out the reaction L-cysteine + L-glutamate + ATP = gamma-L-glutamyl-L-cysteine + ADP + phosphate + H(+). It catalyses the reaction gamma-L-glutamyl-L-cysteine + glycine + ATP = glutathione + ADP + phosphate + H(+). It participates in sulfur metabolism; glutathione biosynthesis; glutathione from L-cysteine and L-glutamate: step 1/2. The protein operates within sulfur metabolism; glutathione biosynthesis; glutathione from L-cysteine and L-glutamate: step 2/2. Its function is as follows. Synthesizes glutathione from L-glutamate and L-cysteine via gamma-L-glutamyl-L-cysteine. This is Glutathione biosynthesis bifunctional protein GshAB from Streptococcus agalactiae serotype III (strain NEM316).